Reading from the N-terminus, the 597-residue chain is Aspartate--tRNA(Asp/Asn) ligase (597 aa).

Residue glutamate 175 participates in L-aspartate binding. The tract at residues 199–202 is aspartate; that stretch reads QQYK. Residues arginine 221 and histidine 454 each coordinate L-aspartate. ATP is bound at residue 221-223; that stretch reads RDE. Glutamate 488 is an ATP binding site. Arginine 495 lines the L-aspartate pocket. ATP is bound at residue 540-543; the sequence is GIDR.

It belongs to the class-II aminoacyl-tRNA synthetase family. Type 1 subfamily. In terms of assembly, homodimer.

Its subcellular location is the cytoplasm. The catalysed reaction is tRNA(Asx) + L-aspartate + ATP = L-aspartyl-tRNA(Asx) + AMP + diphosphate. Aspartyl-tRNA synthetase with relaxed tRNA specificity since it is able to aspartylate not only its cognate tRNA(Asp) but also tRNA(Asn). Reaction proceeds in two steps: L-aspartate is first activated by ATP to form Asp-AMP and then transferred to the acceptor end of tRNA(Asp/Asn). This Bartonella tribocorum (strain CIP 105476 / IBS 506) protein is Aspartate--tRNA(Asp/Asn) ligase.